Reading from the N-terminus, the 458-residue chain is GDP-fucose protein O-fucosyltransferase 3 (458 aa).

The Cytoplasmic segment spans residues 1–11 (MRRISVKKLCS). The helical; Signal-anchor for type II membrane protein transmembrane segment at 12–32 (FCLCACAFAFLVMTFQVIELL) threads the bilayer. At 33–458 (GQFEQTEHRQ…TQFWREVFTD (426 aa)) the chain is on the lumenal side. 3 N-linked (GlcNAc...) asparagine glycosylation sites follow: Asn-92, Asn-150, and Asn-300. A disulfide bridge connects residues Cys-371 and Cys-374. Asn-445 carries an N-linked (GlcNAc...) asparagine glycan.

The protein belongs to the glycosyltransferase 10 family.

The protein resides in the endoplasmic reticulum membrane. It carries out the reaction L-threonyl-[protein] + GDP-beta-L-fucose = 3-O-(alpha-L-fucosyl)-L-threonyl-[protein] + GDP + H(+). It catalyses the reaction L-seryl-[protein] + GDP-beta-L-fucose = 3-O-(alpha-L-fucosyl)-L-seryl-[protein] + GDP + H(+). The protein operates within protein modification; protein glycosylation. Its function is as follows. Protein O-fucosyltransferase that specifically catalyzes O-fucosylation of serine or threonine residues in EMI domains of target proteins. Attaches fucose through an O-glycosidic linkage. O-fucosylation of EMI domain-containing proteins may be required for facilitating protein folding and secretion. This chain is GDP-fucose protein O-fucosyltransferase 3 (fut10), found in Danio rerio (Zebrafish).